Reading from the N-terminus, the 179-residue chain is Large ribosomal subunit protein uL5 (179 aa).

The protein belongs to the universal ribosomal protein uL5 family. Part of the 50S ribosomal subunit; part of the 5S rRNA/L5/L18/L25 subcomplex. Contacts the 5S rRNA and the P site tRNA. Forms a bridge to the 30S subunit in the 70S ribosome.

This is one of the proteins that bind and probably mediate the attachment of the 5S RNA into the large ribosomal subunit, where it forms part of the central protuberance. In the 70S ribosome it contacts protein S13 of the 30S subunit (bridge B1b), connecting the 2 subunits; this bridge is implicated in subunit movement. Contacts the P site tRNA; the 5S rRNA and some of its associated proteins might help stabilize positioning of ribosome-bound tRNAs. In Rickettsia africae (strain ESF-5), this protein is Large ribosomal subunit protein uL5.